A 374-amino-acid chain; its full sequence is Beta sliding clamp (374 aa).

Belongs to the beta sliding clamp family. As to quaternary structure, forms a ring-shaped head-to-tail homodimer around DNA which binds and tethers DNA polymerases and other proteins to the DNA. The DNA replisome complex has a single clamp-loading complex (3 tau and 1 each of delta, delta', psi and chi subunits) which binds 3 Pol III cores (1 core on the leading strand and 2 on the lagging strand) each with a beta sliding clamp dimer. Additional proteins in the replisome are other copies of gamma, psi and chi, Ssb, DNA helicase and RNA primase.

Its subcellular location is the cytoplasm. In terms of biological role, confers DNA tethering and processivity to DNA polymerases and other proteins. Acts as a clamp, forming a ring around DNA (a reaction catalyzed by the clamp-loading complex) which diffuses in an ATP-independent manner freely and bidirectionally along dsDNA. Initially characterized for its ability to contact the catalytic subunit of DNA polymerase III (Pol III), a complex, multichain enzyme responsible for most of the replicative synthesis in bacteria; Pol III exhibits 3'-5' exonuclease proofreading activity. The beta chain is required for initiation of replication as well as for processivity of DNA replication. The protein is Beta sliding clamp (dnaN) of Helicobacter pylori (strain J99 / ATCC 700824) (Campylobacter pylori J99).